The following is a 62-amino-acid chain: Large ribosomal subunit protein uL30 (62 aa).

It belongs to the universal ribosomal protein uL30 family. In terms of assembly, part of the 50S ribosomal subunit.

This Gluconobacter oxydans (strain 621H) (Gluconobacter suboxydans) protein is Large ribosomal subunit protein uL30.